A 488-amino-acid chain; its full sequence is 1-hydroxycarotenoid 3,4-desaturase (488 aa).

FAD is bound by residues glutamate 31, lysine 39, 55 to 56 (SL), valine 247, asparagine 275, leucine 431, glycine 461, and 468 to 469 (GI).

It belongs to the carotenoid/retinoid oxidoreductase family. As to quaternary structure, monomer.

It carries out the reaction rhodopin + A = (3E)-3,4-didehydrorhodopin + AH2. The catalysed reaction is 1'-hydroxy-gamma-carotene + A = 1'-hydroxytorulene + AH2. The enzyme catalyses 1-hydroxy-all-trans-1,2-dihydro-neurosporene + A = demethylspheroidene + AH2. It catalyses the reaction 1,1'-dihydroxy-1,1',2,2'-tetrahydroneurosporene + A = 1'-hydroxy-demethylspheroidene + AH2. It carries out the reaction 1,1'-dihydroxy-1,1',2,2'-tetrahydrolycopene + A = 1,1'-dihydroxy-3,4-didehydro-1,2-dihydrolycopene + AH2. It functions in the pathway carotenoid biosynthesis. In terms of biological role, catalyzes the introduction of a C-3,4 double bond into 1'-hydroxy-gamma-carotene and rhodopin (1-hydroxylycopene) to yield 1'-hydroxytorulene and (3E)-3,4-didehydrorhodopin, respectively. Can also 1-hydroxy-all-trans-1,2-dihydro-neurosporene, 1,1'-dihydroxy-1,1',2,2'-tetrahydroneurosporene and 1,1'-dihydroxy-1,1',2,2'-tetrahydrolycopene. Probably involved in the synthesis of myxol, a gamma-carotene derivative. May use FAD as a proton acceptor. In Flavobacterium sp. (strain P99-3), this protein is 1-hydroxycarotenoid 3,4-desaturase.